Consider the following 431-residue polypeptide: tRNA(Ile)-lysidine synthase (431 aa).

25-30 provides a ligand contact to ATP; the sequence is SGGLDS.

The protein belongs to the tRNA(Ile)-lysidine synthase family.

It localises to the cytoplasm. The catalysed reaction is cytidine(34) in tRNA(Ile2) + L-lysine + ATP = lysidine(34) in tRNA(Ile2) + AMP + diphosphate + H(+). Ligates lysine onto the cytidine present at position 34 of the AUA codon-specific tRNA(Ile) that contains the anticodon CAU, in an ATP-dependent manner. Cytidine is converted to lysidine, thus changing the amino acid specificity of the tRNA from methionine to isoleucine. The chain is tRNA(Ile)-lysidine synthase from Legionella pneumophila (strain Paris).